The following is a 176-amino-acid chain: NAD(P)H-quinone oxidoreductase subunit 6, chloroplastic (176 aa).

5 consecutive transmembrane segments (helical) span residues 10–30 (FLLV…ILFT), 33–53 (IFSA…YIIA), 61–81 (AQLL…VMFI), 92–112 (LFTL…FLLI), and 152–172 (FFPP…GAIA).

Belongs to the complex I subunit 6 family. As to quaternary structure, NDH is composed of at least 16 different subunits, 5 of which are encoded in the nucleus.

The protein resides in the plastid. It is found in the chloroplast thylakoid membrane. The enzyme catalyses a plastoquinone + NADH + (n+1) H(+)(in) = a plastoquinol + NAD(+) + n H(+)(out). It carries out the reaction a plastoquinone + NADPH + (n+1) H(+)(in) = a plastoquinol + NADP(+) + n H(+)(out). NDH shuttles electrons from NAD(P)H:plastoquinone, via FMN and iron-sulfur (Fe-S) centers, to quinones in the photosynthetic chain and possibly in a chloroplast respiratory chain. The immediate electron acceptor for the enzyme in this species is believed to be plastoquinone. Couples the redox reaction to proton translocation, and thus conserves the redox energy in a proton gradient. The protein is NAD(P)H-quinone oxidoreductase subunit 6, chloroplastic (ndhG) of Fagopyrum esculentum subsp. ancestrale (Wild buckwheat).